The chain runs to 277 residues: Phycobilisome rod-core linker polypeptide CpcG1 (277 aa).

One can recognise a PBS-linker domain in the interval 11–189 (RTLDQRVVSY…YWRNKEISLS (179 aa)).

Belongs to the phycobilisome linker protein family. In terms of assembly, the phycobilisome is a hemidiscoidal structure that is composed of two distinct substructures: a core complex and a number of rods radiating from the core.

The protein resides in the cellular thylakoid membrane. In terms of biological role, rod-core linker protein required for attachment of phycocyanin to allophycocyanin in cores of phycobilisomes. Functionally, linker polypeptides determine the state of aggregation and the location of the disk-shaped phycobiliprotein units within the phycobilisome and modulate their spectroscopic properties in order to mediate a directed and optimal energy transfer. This Thermosynechococcus vestitus (strain NIES-2133 / IAM M-273 / BP-1) protein is Phycobilisome rod-core linker polypeptide CpcG1 (cpcG1).